Reading from the N-terminus, the 350-residue chain is Pleckstrin (350 aa).

One can recognise a PH 1 domain in the interval 4–101; the sequence is KRIREGYLVK…WVRDIKKAIK (98 aa). Residue lysine 64 is modified to N6-acetyllysine. 2 positions are modified to phosphoserine; by PKC: serine 113 and serine 117. The region spanning 136–221 is the DEP domain; the sequence is TEKGIKELNL…NPDAFYYFPD (86 aa). Positions 244 to 347 constitute a PH 2 domain; sequence VIIKQGCLLK…WIRAIQMASR (104 aa).

Its function is as follows. Major protein kinase C substrate of platelets. The chain is Pleckstrin (PLEK) from Homo sapiens (Human).